The chain runs to 238 residues: Probable transcriptional regulatory protein CHU_3516 (238 aa).

The protein belongs to the TACO1 family.

The protein resides in the cytoplasm. The polypeptide is Probable transcriptional regulatory protein CHU_3516 (Cytophaga hutchinsonii (strain ATCC 33406 / DSM 1761 / CIP 103989 / NBRC 15051 / NCIMB 9469 / D465)).